The sequence spans 180 residues: Meiotic recombination protein rec15 (180 aa).

In terms of assembly, homomer. Interacts (via C-terminus) with hop1 (via C-terminus); the interaction is direct. Interacts (via C-terminus) with rec10; the interaction is direct. Interacts with mde2; the interaction is direct.

Its subcellular location is the nucleus. The protein localises to the chromosome. Functionally, required during the early stages of meiosis for meiotic recombination. This Schizosaccharomyces pombe (strain 972 / ATCC 24843) (Fission yeast) protein is Meiotic recombination protein rec15.